The primary structure comprises 227 residues: Fibrillarin-like rRNA/tRNA 2'-O-methyltransferase (227 aa).

S-adenosyl-L-methionine-binding positions include 82–83 (TT), 100–101 (EF), 125–126 (DA), and 145–148 (DVAQ).

The protein belongs to the methyltransferase superfamily. Fibrillarin family. Interacts with nop5. Component of box C/D small ribonucleoprotein (sRNP) particles that contain rpl7ae, FlpA and nop5, plus a guide RNA.

Involved in pre-rRNA and tRNA processing. Utilizes the methyl donor S-adenosyl-L-methionine to catalyze the site-specific 2'-hydroxyl methylation of ribose moieties in rRNA and tRNA. Site specificity is provided by a guide RNA that base pairs with the substrate. Methylation occurs at a characteristic distance from the sequence involved in base pairing with the guide RNA. The polypeptide is Fibrillarin-like rRNA/tRNA 2'-O-methyltransferase (Methanosarcina mazei (strain ATCC BAA-159 / DSM 3647 / Goe1 / Go1 / JCM 11833 / OCM 88) (Methanosarcina frisia)).